Reading from the N-terminus, the 397-residue chain is Elongation factor Tu 1 (397 aa).

Positions 10 to 206 (KPHVNIGTIG…AVDENIPQPE (197 aa)) constitute a tr-type G domain. Residues 19 to 26 (GHIDHGKT) form a G1 region. 19 to 26 (GHIDHGKT) is a binding site for GTP. Threonine 26 is a binding site for Mg(2+). Residues 62–66 (GITIS) are G2. The interval 83–86 (DCPG) is G3. Residues 83–87 (DCPGH) and 138–141 (NKAD) each bind GTP. The tract at residues 138 to 141 (NKAD) is G4. Residues 176-178 (SAL) are G5.

It belongs to the TRAFAC class translation factor GTPase superfamily. Classic translation factor GTPase family. EF-Tu/EF-1A subfamily. Monomer.

Its subcellular location is the cytoplasm. The enzyme catalyses GTP + H2O = GDP + phosphate + H(+). Functionally, GTP hydrolase that promotes the GTP-dependent binding of aminoacyl-tRNA to the A-site of ribosomes during protein biosynthesis. This is Elongation factor Tu 1 from Streptomyces avermitilis (strain ATCC 31267 / DSM 46492 / JCM 5070 / NBRC 14893 / NCIMB 12804 / NRRL 8165 / MA-4680).